Reading from the N-terminus, the 45-residue chain is Proteinase inhibitor IIA (45 aa).

Intrachain disulfides connect cysteine 10–cysteine 24, cysteine 14–cysteine 35, and cysteine 20–cysteine 43.

The protein belongs to the protease inhibitor I20 (potato type II proteinase inhibitor) family.

It is found in the secreted. Functionally, inhibits trypsin strongly and chymotrypsin temporarily. This chain is Proteinase inhibitor IIA, found in Solanum tuberosum (Potato).